The sequence spans 856 residues: Putative zinc protease C28F5.4 (856 aa).

His71 contributes to the Zn(2+) binding site. Glu74 (proton acceptor) is an active-site residue. Zn(2+)-binding residues include His75 and Glu152.

This sequence belongs to the peptidase M16 family.

This chain is Putative zinc protease C28F5.4, found in Caenorhabditis elegans.